The chain runs to 343 residues: MSEESDSLRTSPSVASLSENELPLPPPDPPGYVCSLTEDLVTKAREELQEKPEWRLRDVQALRDMVRKEYPYLSTSLDDAFLLRFLRARKFDYDRALQLLVNYHGCRRSWPEVFSNLRPSALKDVLNSGFLTVLPHTDPRGCHVLCIRPDRWIPSNYPITENIRAVYLTLEKLIQSEETQVNGIVILADYKGVSLSKASHFGPFIAKKVIGILQDGFPIRIKAVHIVNEPRIFKGIFAIIKPFLKEKIANRFFLHGSDLNSLHTNLPRNILPKEYGGTAGELDTASWNAVLLASEEDFVKEFCQPMPACDNLLGQPLLPEGLISDAQCDDSMRAMKSQLYSCY.

Residues 1–29 form a disordered region; sequence MSEESDSLRTSPSVASLSENELPLPPPDP. Over residues 8–19 the composition is skewed to polar residues; the sequence is LRTSPSVASLSE. One can recognise a CRAL-TRIO domain in the interval 118–283; the sequence is RPSALKDVLN…EYGGTAGELD (166 aa).

Its function is as follows. May act as a protein that binds a hydrophobic ligand. This Mus musculus (Mouse) protein is Alpha-tocopherol transfer protein-like (Ttpal).